Consider the following 430-residue polypeptide: Adenylosuccinate synthetase (430 aa).

Residues 12–18 (GDEGKGK) and 40–42 (GHT) contribute to the GTP site. Residue aspartate 13 is the Proton acceptor of the active site. The Mg(2+) site is built by aspartate 13 and glycine 40. IMP contacts are provided by residues 13–16 (DEGK), 38–41 (NAGH), threonine 130, arginine 144, glutamine 224, threonine 239, and arginine 303. Histidine 41 functions as the Proton donor in the catalytic mechanism. A substrate-binding site is contributed by 299–305 (TNTGRPR). GTP-binding positions include arginine 305, 331-333 (KLD), and 413-415 (STS).

Belongs to the adenylosuccinate synthetase family. Homodimer. Mg(2+) is required as a cofactor.

Its subcellular location is the cytoplasm. It catalyses the reaction IMP + L-aspartate + GTP = N(6)-(1,2-dicarboxyethyl)-AMP + GDP + phosphate + 2 H(+). Its pathway is purine metabolism; AMP biosynthesis via de novo pathway; AMP from IMP: step 1/2. Its function is as follows. Plays an important role in the de novo pathway of purine nucleotide biosynthesis. Catalyzes the first committed step in the biosynthesis of AMP from IMP. This chain is Adenylosuccinate synthetase, found in Rhodopseudomonas palustris (strain HaA2).